Here is a 647-residue protein sequence, read N- to C-terminus: Threonine--tRNA ligase (647 aa).

In terms of domain architecture, TGS spans 1-61 (MIKITFPDGA…EEDGSIEIVT (61 aa)). Residues 240-538 (DHRKLGKELD…LIETYKGAFP (299 aa)) form a catalytic region. The Zn(2+) site is built by cysteine 334, histidine 385, and histidine 515.

Belongs to the class-II aminoacyl-tRNA synthetase family. In terms of assembly, homodimer. Zn(2+) serves as cofactor.

It is found in the cytoplasm. It catalyses the reaction tRNA(Thr) + L-threonine + ATP = L-threonyl-tRNA(Thr) + AMP + diphosphate + H(+). Its function is as follows. Catalyzes the attachment of threonine to tRNA(Thr) in a two-step reaction: L-threonine is first activated by ATP to form Thr-AMP and then transferred to the acceptor end of tRNA(Thr). Also edits incorrectly charged L-seryl-tRNA(Thr). The sequence is that of Threonine--tRNA ligase from Streptococcus agalactiae serotype III (strain NEM316).